Here is a 147-residue protein sequence, read N- to C-terminus: UPF0306 protein YhbP (147 aa).

This sequence belongs to the UPF0306 family.

The polypeptide is UPF0306 protein YhbP (Salmonella schwarzengrund (strain CVM19633)).